Here is a 719-residue protein sequence, read N- to C-terminus: Phenylalanine--tRNA ligase beta subunit, chloroplastic (719 aa).

One can recognise a B5 domain in the interval 318 to 403 (DHALNINLSI…RIYGYHKFRS (86 aa)). 4 residues coordinate Mg(2+): Asp-381, Asp-387, Glu-390, and Glu-391. Positions 625–718 (SKYPSIIRDL…IVKQLNLKIR (94 aa)) constitute an FDX-ACB domain.

It belongs to the phenylalanyl-tRNA synthetase beta subunit family. Type 1 subfamily. In terms of assembly, tetramer of two alpha and two beta subunits. It depends on Mg(2+) as a cofactor.

Its subcellular location is the plastid. The protein localises to the chloroplast. The catalysed reaction is tRNA(Phe) + L-phenylalanine + ATP = L-phenylalanyl-tRNA(Phe) + AMP + diphosphate + H(+). In Pyropia yezoensis (Susabi-nori), this protein is Phenylalanine--tRNA ligase beta subunit, chloroplastic.